The sequence spans 371 residues: Transcription factor MYB12 (371 aa).

HTH myb-type domains lie at 9-61 (KVGI…INYL) and 62-116 (RSDL…SRKL). 2 DNA-binding regions (H-T-H motif) span residues 37–61 (WRSL…INYL) and 89–112 (WSLI…NSHL). The tract at residues 136–183 (NASSAPPPPQAKRRLGRTSRSAMKPKIHRTKTRKTKKTSAPPEPNADV) is disordered. Over residues 146 to 172 (AKRRLGRTSRSAMKPKIHRTKTRKTKK) the composition is skewed to basic residues.

In terms of tissue distribution, expressed in stems and flower buds. Expressed in seedlings, roots, cotyledons and apical meristems.

The protein resides in the nucleus. In terms of biological role, flavonol-specific transcription activator involved in the regulation of several genes of flavonoid biosynthesis. Activates the expression of CHS, CHI, F3H and FLS1. Controls flavonol biosynthesis mainly in the root. Confers tolerance to UV-B. This is Transcription factor MYB12 from Arabidopsis thaliana (Mouse-ear cress).